We begin with the raw amino-acid sequence, 145 residues long: Protein phosphatase 1 regulatory subunit 14D (145 aa).

Over residues 1–14 the composition is skewed to low complexity; it reads MLSSSPASCTSPSP. Residues 1-59 are disordered; the sequence is MLSSSPASCTSPSPDGENPCKKVHWASGRRRTSSTDSESKSHPDSSKIPRSRRPSRLTV. The tract at residues 21–25 is interaction with protein phosphatase 1; the sequence is KKVHW. Residues 21 to 32 show a composition bias toward basic residues; sequence KKVHWASGRRRT. The span at 37-47 shows a compositional bias: basic and acidic residues; the sequence is SESKSHPDSSK. T58 bears the Phosphothreonine mark.

This sequence belongs to the PP1 inhibitor family. Post-translationally, phosphorylated on several residues. In terms of tissue distribution, detected in colon, intestine, kidney and brain cortex.

It is found in the cytoplasm. In terms of biological role, inhibitor of PPP1CA. Has inhibitory activity only when phosphorylated, creating a molecular switch for regulating the phosphorylation status of PPP1CA substrates and smooth muscle contraction. The protein is Protein phosphatase 1 regulatory subunit 14D (PPP1R14D) of Homo sapiens (Human).